Here is a 449-residue protein sequence, read N- to C-terminus: Probable cysteine proteinase 224L (449 aa).

Residues Cys-99, His-292, and Asn-322 contribute to the active site. A helical transmembrane segment spans residues 429–449 (DTQIVFIFFLSVVILFIFIIL).

The protein belongs to the peptidase C1 family.

It localises to the membrane. Probable cysteine protease. In Acheta domesticus (House cricket), this protein is Probable cysteine proteinase 224L.